Consider the following 77-residue polypeptide: Translation initiation factor IF-1, chloroplastic (77 aa).

The S1-like domain maps to 1-72 (MNKQGLFQME…TKGRIVYRQR (72 aa)).

It belongs to the IF-1 family. In terms of assembly, component of the 30S ribosomal translation pre-initiation complex which assembles on the 30S ribosome in the order IF-2 and IF-3, IF-1 and N-formylmethionyl-tRNA(fMet); mRNA recruitment can occur at any time during PIC assembly.

The protein resides in the plastid. It is found in the chloroplast. Its function is as follows. One of the essential components for the initiation of protein synthesis. Stabilizes the binding of IF-2 and IF-3 on the 30S subunit to which N-formylmethionyl-tRNA(fMet) subsequently binds. Helps modulate mRNA selection, yielding the 30S pre-initiation complex (PIC). Upon addition of the 50S ribosomal subunit IF-1, IF-2 and IF-3 are released leaving the mature 70S translation initiation complex. This chain is Translation initiation factor IF-1, chloroplastic, found in Nephroselmis olivacea (Green alga).